Reading from the N-terminus, the 35-residue chain is Photosystem II reaction center protein T (35 aa).

Residues 3-23 (ALVYTFLLVSTLGIIFFAIFF) traverse the membrane as a helical segment.

Belongs to the PsbT family. As to quaternary structure, PSII is composed of 1 copy each of membrane proteins PsbA, PsbB, PsbC, PsbD, PsbE, PsbF, PsbH, PsbI, PsbJ, PsbK, PsbL, PsbM, PsbT, PsbY, PsbZ, Psb30/Ycf12, at least 3 peripheral proteins of the oxygen-evolving complex and a large number of cofactors. It forms dimeric complexes.

The protein resides in the plastid. The protein localises to the chloroplast thylakoid membrane. Found at the monomer-monomer interface of the photosystem II (PS II) dimer, plays a role in assembly and dimerization of PSII. PSII is a light-driven water plastoquinone oxidoreductase, using light energy to abstract electrons from H(2)O, generating a proton gradient subsequently used for ATP formation. The chain is Photosystem II reaction center protein T from Taxus brevifolia (Pacific yew).